The chain runs to 399 residues: Zinc finger TRAF-type-containing protein 1 (399 aa).

Residues 1 to 13 (MSGAEEAGGGGPA) show a composition bias toward gly residues. The segment at 1–21 (MSGAEEAGGGGPAAGPAGAVP) is disordered. Residues 106–151 (CTVCLDLPKASVYQCTNGHLMCAGCFIHLLADARLKEEQATCPNCR) form an RING-type; degenerate zinc finger. The TRAF-type zinc finger occupies 152-210 (CEISKSLCCRNLAVEKAVSELPSECGFCLRQFPRSLLERHQKEECQDRVTQCKYKRIGC).

This sequence belongs to the ZFTRAF1 family. As to quaternary structure, interacts with LGALS3. As to expression, expressed in heart, brain, liver, testis and kidney.

The protein localises to the cytoplasm. It localises to the perinuclear region. The polypeptide is Zinc finger TRAF-type-containing protein 1 (Mus musculus (Mouse)).